A 135-amino-acid chain; its full sequence is Large ribosomal subunit protein uL22c (135 aa).

Belongs to the universal ribosomal protein uL22 family. As to quaternary structure, part of the 50S ribosomal subunit.

It is found in the plastid. In terms of biological role, this protein binds specifically to 23S rRNA. Its function is as follows. The globular domain of the protein is located near the polypeptide exit tunnel on the outside of the subunit, while an extended beta-hairpin is found that lines the wall of the exit tunnel in the center of the 70S ribosome. This Cuscuta reflexa (Southern Asian dodder) protein is Large ribosomal subunit protein uL22c (rpl22).